The sequence spans 456 residues: MIINSNIKITLEERSNKLEQSHIEIGLLIGQESEISEQQTFVLGLFPTPLNISNTDDDNNNKPINIDSISSIDKEWILEYCHQVNIMLYGGIDIVGIYMIIPDSDTLNEKNNESFIMKLLKSIHTIINSKSLQFISYSKKTGLINGKATNSTQLYRLKSTEIKVINNLENEFLSLHCILPIDIKLKSKNGMISFENLKKDIIEIFENQLFKESTLLIENEFVSGNEIISQQFKSKSKLNIDLLINQLDSISTSSLEFNFNNNNNTHCIAYIHQLEQIKTAFKFIKKDIIKSVESRFDLLFNEISSNNNNNDNDQDNIKLSKESPILELPRRVNIQWLSNKISICDYLSSNGTIDDCYKIINDLLQITSPKINSIESSKNNNNNNNNNNNNNNNNNNNNSKLSNKKENNEIKENKDTQSNLTKSTSQQQTKQTNNSYLIIIISVLVLMVAFYFKFFV.

A compositionally biased stretch (low complexity) spans 374 to 401; sequence IESSKNNNNNNNNNNNNNNNNNNNNSKL. The disordered stretch occupies residues 374 to 403; that stretch reads IESSKNNNNNNNNNNNNNNNNNNNNSKLSN. A helical membrane pass occupies residues 436-456; it reads YLIIIISVLVLMVAFYFKFFV.

This sequence belongs to the ODR-4 family.

It is found in the membrane. In terms of biological role, may play a role in the trafficking of a subset of G-protein coupled receptors. The protein is Protein odr-4 homolog of Dictyostelium discoideum (Social amoeba).